The chain runs to 459 residues: Vitronectin (459 aa).

Residues 1–19 form the signal peptide; it reads MAPLRPLLMLALLAWVALA. An SMB domain is found at 20–63; sequence DQESCKGRCTDGFIAERKCQCDELCSYYQSCCTDYVAECKPQVT. Cystine bridges form between Cys24–Cys28, Cys24–Cys40, Cys28–Cys58, Cys38–Cys40, Cys38–Cys51, Cys44–Cys50, and Cys51–Cys58. Positions 64–66 match the Cell attachment site motif; the sequence is RGD. Tyr75, Tyr78, and Tyr80 each carry sulfotyrosine. 2 N-linked (GlcNAc...) asparagine glycosylation sites follow: Asn87 and Asn146. Hemopexin repeat units follow at residues 135–179, 180–227, and 228–285; these read GKPF…VWGI, KGPI…FKGI, and PDDV…FALM. Phosphoserine is present on residues Ser289 and Ser378. The tract at residues 338–380 is disordered; sequence LKPSQPKMTKSARRSGKRYRSRRGRGRGRGHSRSQKSHRQSRS. Basic residues predominate over residues 347–378; that stretch reads KSARRSGKRYRSRRGRGRGRGHSRSQKSHRQS. Tyr398 and Tyr401 each carry sulfotyrosine. One copy of the Hemopexin 4 repeat lies at 400-453; sequence DYKMDWLVPATCEPIQSVYFFSGEEYYRVNLRTQRVDTVTPPYPRSIAQYWLGC.

As to quaternary structure, monomer. Interacts with SERPINE1/PAI1 and C1QBP. Post-translationally, sulfated on tyrosine residues. N- and O-glycosylated. In terms of processing, it has been suggested that the active SMB domain may be permitted considerable disulfide bond heterogeneity or variability, thus two alternate disulfide patterns based on 3D structures are described with 1 disulfide bond conserved in both. In terms of tissue distribution, plasma.

It localises to the secreted. Its subcellular location is the extracellular space. Vitronectin is a cell adhesion and spreading factor found in serum and tissues. Vitronectin interact with glycosaminoglycans and proteoglycans. Is recognized by certain members of the integrin family and serves as a cell-to-substrate adhesion molecule. Inhibitor of the membrane-damaging effect of the terminal cytolytic complement pathway. This Sus scrofa (Pig) protein is Vitronectin (VTN).